The chain runs to 314 residues: Cytochrome b558/566 subunit B (314 aa).

8 helical membrane passes run L47 to S67, S76 to Y96, L102 to I122, L127 to L147, L155 to I175, Y186 to I206, H233 to I253, and F264 to L284.

It localises to the cell membrane. The chain is Cytochrome b558/566 subunit B (cbsB) from Saccharolobus solfataricus (strain ATCC 35092 / DSM 1617 / JCM 11322 / P2) (Sulfolobus solfataricus).